Here is a 200-residue protein sequence, read N- to C-terminus: ATP-dependent Clp protease proteolytic subunit (200 aa).

Residue Ser101 is the Nucleophile of the active site. His126 is a catalytic residue.

The protein belongs to the peptidase S14 family. Component of the chloroplastic Clp protease core complex.

The protein localises to the plastid. It localises to the chloroplast stroma. It carries out the reaction Hydrolysis of proteins to small peptides in the presence of ATP and magnesium. alpha-casein is the usual test substrate. In the absence of ATP, only oligopeptides shorter than five residues are hydrolyzed (such as succinyl-Leu-Tyr-|-NHMec, and Leu-Tyr-Leu-|-Tyr-Trp, in which cleavage of the -Tyr-|-Leu- and -Tyr-|-Trp bonds also occurs).. Its function is as follows. Cleaves peptides in various proteins in a process that requires ATP hydrolysis. Has a chymotrypsin-like activity. Plays a major role in the degradation of misfolded proteins. The polypeptide is ATP-dependent Clp protease proteolytic subunit (Ostreococcus tauri).